The sequence spans 512 residues: Lysine--tRNA ligase (512 aa).

Residues Glu421 and Glu428 each contribute to the Mg(2+) site.

Belongs to the class-II aminoacyl-tRNA synthetase family. As to quaternary structure, homodimer. The cofactor is Mg(2+).

The protein resides in the cytoplasm. The catalysed reaction is tRNA(Lys) + L-lysine + ATP = L-lysyl-tRNA(Lys) + AMP + diphosphate. The polypeptide is Lysine--tRNA ligase (Aeromonas salmonicida (strain A449)).